The sequence spans 491 residues: Argininosuccinate lyase (491 aa).

It belongs to the lyase 1 family. Argininosuccinate lyase subfamily.

The protein resides in the cytoplasm. It catalyses the reaction 2-(N(omega)-L-arginino)succinate = fumarate + L-arginine. Its pathway is amino-acid biosynthesis; L-arginine biosynthesis; L-arginine from L-ornithine and carbamoyl phosphate: step 3/3. This is Argininosuccinate lyase from Methanosarcina acetivorans (strain ATCC 35395 / DSM 2834 / JCM 12185 / C2A).